Reading from the N-terminus, the 807-residue chain is Glycerol-3-phosphate acyltransferase (807 aa).

Residues 308-313 carry the HXXXXD motif motif; sequence CHRSHM.

The protein belongs to the GPAT/DAPAT family.

It is found in the cell inner membrane. The catalysed reaction is sn-glycerol 3-phosphate + an acyl-CoA = a 1-acyl-sn-glycero-3-phosphate + CoA. It functions in the pathway phospholipid metabolism; CDP-diacylglycerol biosynthesis; CDP-diacylglycerol from sn-glycerol 3-phosphate: step 1/3. In Shewanella loihica (strain ATCC BAA-1088 / PV-4), this protein is Glycerol-3-phosphate acyltransferase.